Reading from the N-terminus, the 518-residue chain is MTQHDRLLIIDFGSQVTQLIARRLRELNVYCEIHPYQNVTEAFLKGFAPKAVIFSGGPSSVFAEGAPMPPACVFEMGVPILGICYGQQVMMHCLGGKVERGHGTAEFGRAFVTPAEGRLAILDGWFEDGREQVWMSHGDHVSQIAPGFQVFGTSPNAPFAITADPARHFYAVQFHPEVHHTPKGAKLYENFVKLAGFKGDWTMGAYREEAIAKIRAQVGDQKVICGLSGGVDSSVAAVLIHEAIGDQLTCVFVDHGLLRLGEAEQVVTMFRDHYNMPLIHADESDLFLGALEGVSDPEVKRKTIGRLFIDVFQKHAADVGGATFLAQGTLYPDVIESVSFSGGPSVTIKSHHNVGGLPEKMGLKLVEPLRELFKDEVRALGRELGLPDSFIGRHPFPGPGLAIRCPGEITREKLEILRQADAVYIDQIRRHGLYDEIWQAFVALLPVRTVGVMGDGRTYDYACALRAVTSVDGMTADYYPFTHEFLGETATRIINEVQGINRVTYDITSKPPGTIEWE.

The region spanning 6-200 is the Glutamine amidotransferase type-1 domain; it reads RLLIIDFGSQ…FVKLAGFKGD (195 aa). Cys84 (nucleophile) is an active-site residue. Catalysis depends on residues His175 and Glu177. The GMPS ATP-PPase domain maps to 201–393; it reads WTMGAYREEA…LGLPDSFIGR (193 aa). 228–234 lines the ATP pocket; sequence SGGVDSS.

Homodimer.

It carries out the reaction XMP + L-glutamine + ATP + H2O = GMP + L-glutamate + AMP + diphosphate + 2 H(+). It functions in the pathway purine metabolism; GMP biosynthesis; GMP from XMP (L-Gln route): step 1/1. Its function is as follows. Catalyzes the synthesis of GMP from XMP. The sequence is that of GMP synthase [glutamine-hydrolyzing] from Cereibacter sphaeroides (strain ATCC 17025 / ATH 2.4.3) (Rhodobacter sphaeroides).